The sequence spans 268 residues: NH(3)-dependent NAD(+) synthetase (268 aa).

Residue 46 to 53 (GVSGGQDS) coordinates ATP. Residue aspartate 52 coordinates Mg(2+). Arginine 140 lines the deamido-NAD(+) pocket. Threonine 160 contacts ATP. Residue glutamate 165 participates in Mg(2+) binding. Positions 173 and 180 each coordinate deamido-NAD(+). Position 189 (lysine 189) interacts with ATP. 260–261 (HK) is a deamido-NAD(+) binding site.

This sequence belongs to the NAD synthetase family. In terms of assembly, homodimer.

It carries out the reaction deamido-NAD(+) + NH4(+) + ATP = AMP + diphosphate + NAD(+) + H(+). Its pathway is cofactor biosynthesis; NAD(+) biosynthesis; NAD(+) from deamido-NAD(+) (ammonia route): step 1/1. Its function is as follows. Catalyzes the ATP-dependent amidation of deamido-NAD to form NAD. Uses ammonia as a nitrogen source. In Buchnera aphidicola subsp. Acyrthosiphon pisum (strain APS) (Acyrthosiphon pisum symbiotic bacterium), this protein is NH(3)-dependent NAD(+) synthetase.